The sequence spans 1228 residues: Calcium-transporting ATPase (1228 aa).

Topologically, residues 1–63 (MEEVIKNAHT…FELILNQFDD (63 aa)) are cytoplasmic. Residues 64–81 (LLVKILLLAAFISFVLTL) traverse the membrane as a helical segment. Over 82-92 (LDMKHKKIEIC) the chain is Extracellular. Residues 93–112 (DFIEPLVIVLILILNAAVGV) form a helical membrane-spanning segment. Topologically, residues 113 to 270 (WQECNAEKSL…IDLFGQQLSK (158 aa)) are cytoplasmic. The chain crosses the membrane as a helical span at residues 271-291 (IIFVICVTVWIINFKHFSDPI). Residues 292 to 300 (HGSFLYGCL) are Extracellular-facing. A helical transmembrane segment spans residues 301 to 321 (YYFKISVALAVAAIPEGLPAV). The Cytoplasmic portion of the chain corresponds to 322–974 (ITTCLALGTR…IYNNMKAFIR (653 aa)). Asp358 serves as the catalytic 4-aspartylphosphate intermediate. Disordered regions lie at residues 452–478 (MKND…IPLK) and 562–613 (MPAE…LKNA). Over residues 589–604 (FFSSKNDNSHITSTLN) the composition is skewed to polar residues. Lys716 serves as a coordination point for ATP. A helical membrane pass occupies residues 975-994 (YLISSNIGEVASIFITALLG). The Extracellular segment spans residues 995 to 1000 (IPDSLA). The chain crosses the membrane as a helical span at residues 1001-1021 (PVQLLWVNLVTDGLPATALGF). The Cytoplasmic segment spans residues 1022–1042 (NPPEHDVMKCKPRHKNDNLIN). Residues 1043–1067 (GLTLLRYIIIGTYVGIATVSIFVYW) traverse the membrane as a helical segment. The Extracellular portion of the chain corresponds to 1068–1118 (FLFYPDSDMHTLINFYQLSHYNQCKAWNNFRVNKVYDMSEDHCSYFSAGKI). The chain crosses the membrane as a helical span at residues 1119–1140 (KASTLSLSVLVLIEMFNALNAL). Residues 1141-1151 (SEYNSLFEIPP) lie on the Cytoplasmic side of the membrane. Residues 1152–1172 (WRNMYLVLATIGSLLLHVLIL) traverse the membrane as a helical segment. Residues 1173-1185 (YIPPLARIFGVVP) are Extracellular-facing. Residues 1186 to 1206 (LSAYDWFLVFLWSFPVIILDE) form a helical membrane-spanning segment. Residues 1207-1228 (IIKFYAKRKLKEEQRTKKIKID) lie on the Cytoplasmic side of the membrane.

The protein belongs to the cation transport ATPase (P-type) (TC 3.A.3) family.

It localises to the membrane. It catalyses the reaction Ca(2+)(in) + ATP + H2O = Ca(2+)(out) + ADP + phosphate + H(+). In terms of biological role, this magnesium-dependent enzyme catalyzes the hydrolysis of ATP coupled with the transport of the calcium. In Plasmodium falciparum (isolate K1 / Thailand), this protein is Calcium-transporting ATPase (ATP6).